A 400-amino-acid polypeptide reads, in one-letter code: Large envelope protein (400 aa).

G2 carries the N-myristoyl glycine; by host lipid modification. Residues 2–119 (GGWLPKPRKG…PPLRDSHPQA (118 aa)) form a pre-S1 region. The interval 2–174 (GGWLPKPRKG…SSRTGDPAPT (173 aa)) is pre-S. The Virion surface; in external conformation portion of the chain corresponds to 2–181 (GGWLPKPRKG…APTMENITSG (180 aa)). Residues 2 to 253 (GGWLPKPRKG…PGYRWMCLRR (252 aa)) are Intravirion; in internal conformation-facing. The disordered stretch occupies residues 84–115 (TLTTVPAVPPPASANRQSGRQPTPISPPLRDS). Over residues 97 to 106 (ANRQSGRQPT) the composition is skewed to polar residues. The segment at 120–174 (IKWNSPAFHQALQDPRVKGLYFPAGGSSSGTVSPVPNIASHISSISSRTGDPAPT) is pre-S2. Residues 182-202 (FLGPLLVLQAGFFLLTRILTI) form a helical membrane-spanning segment. At 203–253 (PQSLDSWWTSLNFLGGSPVCLGQNSQSPTSNHSPTSCPPICPGYRWMCLRR) the chain is on the intravirion; in external conformation side. A helical membrane pass occupies residues 254–274 (FIIFLFILLLCLIFLLVLLDY). Over 275–348 (QGMLPVCPLI…WASVRFSWLS (74 aa)) the chain is Virion surface. A glycan (N-linked (GlcNAc...) asparagine; by host) is linked at N320. The chain crosses the membrane as a helical span at residues 349 to 369 (LLVPFVQWFVGLSPTVWLSVI). At 370 to 375 (WMMWYW) the chain is on the intravirion side. Residues 376–398 (GPRLYNILSPFIPLLPIFFCLWV) form a helical membrane-spanning segment. Residues 399–400 (YI) are Virion surface-facing.

Belongs to the orthohepadnavirus major surface antigen family. Li-HBsAg interacts with capsid protein and with HDV Large delta antigen. Isoform M associates with host chaperone CANX through its pre-S2 N glycan. This association may be essential for M proper secretion. Post-translationally, isoform M is N-terminally acetylated by host at a ratio of 90%, and N-glycosylated by host at the pre-S2 region. Myristoylated.

The protein localises to the virion membrane. Its function is as follows. The large envelope protein exists in two topological conformations, one which is termed 'external' or Le-HBsAg and the other 'internal' or Li-HBsAg. In its external conformation the protein attaches the virus to cell receptors and thereby initiating infection. This interaction determines the species specificity and liver tropism. This attachment induces virion internalization predominantly through caveolin-mediated endocytosis. The large envelope protein also assures fusion between virion membrane and endosomal membrane. In its internal conformation the protein plays a role in virion morphogenesis and mediates the contact with the nucleocapsid like a matrix protein. The middle envelope protein plays an important role in the budding of the virion. It is involved in the induction of budding in a nucleocapsid independent way. In this process the majority of envelope proteins bud to form subviral lipoprotein particles of 22 nm of diameter that do not contain a nucleocapsid. The protein is Large envelope protein of Hepatitis B virus genotype A3 (isolate Cameroon/CMR983/1994) (HBV-A).